A 183-amino-acid chain; its full sequence is Putative calmodulin-like protein 2 (183 aa).

4 EF-hand domains span residues 7–42, 43–78, 80–115, and 116–151; these read EQIA…LGQS, PTEA…KLRD, GAED…LGDP, and LSDD…KRRQ. The Ca(2+) site is built by D20, D22, D24, T26, E31, D56, D58, S60, S62, E67, D93, D95, N97, E104, D129, D131, D133, Q135, and E140. The interval 154 to 183 is disordered; that stretch reads MEGHGSGGHRSSNSHKKSGCCGPNSSCTIL. 2 S-palmitoyl cysteine lipidation sites follow: C173 and C174. A Cysteine methyl ester modification is found at C180. Residue C180 is the site of S-farnesyl cysteine attachment. A propeptide spans 181–183 (removed in mature form); it reads TIL.

The protein belongs to the calmodulin family.

The protein localises to the membrane. In terms of biological role, potential calcium sensor. The sequence is that of Putative calmodulin-like protein 2 (CML2) from Oryza sativa subsp. japonica (Rice).